The sequence spans 383 residues: Izumo sperm-egg fusion protein 1 (383 aa).

The signal sequence occupies residues 1–21 (MGLHFTLLLAALANCLCPARL). Disulfide bonds link cysteine 22/cysteine 149, cysteine 25/cysteine 152, cysteine 135/cysteine 159, cysteine 139/cysteine 165, and cysteine 182/cysteine 233. The Extracellular portion of the chain corresponds to 22–306 (CIICDPFVVA…HRPEKKLKSR (285 aa)). The tract at residues 148 to 160 (WCNKCEKQMHFCR) is important for interaction with IZUMO1R. Positions 167-251 (ERQIEVHRLE…PATIIYYHVT (85 aa)) constitute an Ig-like C2-type domain. The N-linked (GlcNAc...) asparagine glycan is linked to asparagine 204. Residues 307 to 327 (LLILLILGFVVLVASVIASVL) traverse the membrane as a helical segment. Over 328–383 (HFRKTRVKSKNSNVENKTSAAEFKSEAESPQKMGSRKLSQAEFHTDSSDKVEEADN) the chain is Cytoplasmic. Residues 335 to 383 (KSKNSNVENKTSAAEFKSEAESPQKMGSRKLSQAEFHTDSSDKVEEADN) are disordered. Residues 337-346 (KNSNVENKTS) are compositionally biased toward polar residues. Serine 339, serine 346, and serine 366 each carry phosphoserine. Positions 370–383 (FHTDSSDKVEEADN) are enriched in basic and acidic residues. Threonine 372 is modified (phosphothreonine).

The protein belongs to the Izumo family. Monomer, homodimer; disulfide-linked and homooligomer; depending on the context. Interacts with IZUMO1R/JUNO. IZUMO1 and IZUMO1R/JUNO form a complex with 1:1 stoichiometry. In gamete recognition, IZUMO1R/JUNO first binds to monomeric IZUMO1. The weak, but specific interaction with IZUMO1R/JUNO induces IZUMO1 homodimerization. The process follows a tight binding phase where IZUMO1 bends the entire structure towards the sperm membrane side through a thiol-disulfide exchange reaction. The molecule no longer binds to IZUMO1R/JUNO and instead binds to a putative second oocyte receptor. Interacts with ACE3. Part of a oolemmal binding multimeric complex (IZUMO1 complex) composed at least of IZUMO1 and GLIPR1L1; the complex assemblage is influenced by the maturation status of the male germ cell. Interacts with GLIPR1L1. Interacts with FREY; the interaction retains IZUMO1 at the endoplasmic reticulum membrane and coordinates IZUMO1 complex assembly. Interacts with WDR54. Forms a complex with SPACA6 and TMEM81 on spermatocyte cell membrane. N-glycosylated. Glycosylation is not essential for fusion and for proper protein trafficking in sperm. In terms of processing, phosphorylated. The cytoplasmic C-terminus is phosphorylated and undergoes phosphorylation changes during epididymal transit. As to expression, expressed in sperm (at protein level).

Its subcellular location is the cell membrane. The protein localises to the cytoplasmic vesicle. It is found in the secretory vesicle. The protein resides in the acrosome membrane. Functionally, essential sperm cell-surface protein required for fertilization by acting as a ligand for IZUMO1R/JUNO receptor on egg. The IZUMO1:IZUMO1R/JUNO interaction is a necessary adhesion event between sperm and egg that is required for fertilization but is not sufficient for cell fusion. The ligand-receptor interaction probably does not act as a membrane 'fusogen'. Plays a critical role in sperm-oolemma binding prior to plasma membrane fusion. Can mediate cell-cell fusion in cultured mammalian cells independently of its binding to IZUMO1R/JUNO. The polypeptide is Izumo sperm-egg fusion protein 1 (Rattus norvegicus (Rat)).